The following is a 355-amino-acid chain: Heat-inducible transcription repressor HrcA (355 aa).

This sequence belongs to the HrcA family.

Negative regulator of class I heat shock genes (grpE-dnaK-dnaJ and groELS operons). Prevents heat-shock induction of these operons. The sequence is that of Heat-inducible transcription repressor HrcA from Nitratidesulfovibrio vulgaris (strain DP4) (Desulfovibrio vulgaris).